The following is a 476-amino-acid chain: Glycogen synthase (476 aa).

Lysine 15 serves as a coordination point for ADP-alpha-D-glucose.

The protein belongs to the glycosyltransferase 1 family. Bacterial/plant glycogen synthase subfamily.

The enzyme catalyses [(1-&gt;4)-alpha-D-glucosyl](n) + ADP-alpha-D-glucose = [(1-&gt;4)-alpha-D-glucosyl](n+1) + ADP + H(+). It participates in glycan biosynthesis; glycogen biosynthesis. In terms of biological role, synthesizes alpha-1,4-glucan chains using ADP-glucose. This is Glycogen synthase (glgA) from Haemophilus influenzae (strain ATCC 51907 / DSM 11121 / KW20 / Rd).